A 779-amino-acid polypeptide reads, in one-letter code: Anion/proton exchange transporter GEF1 (779 aa).

Residues 1 to 75 (MPTTYVPINQ…REVIWDRAKT (75 aa)) lie on the Cytoplasmic side of the membrane. A helical transmembrane segment spans residues 76-96 (FITLSSTAIVIGCIAGFLQVF). At 97–154 (TETLVNWKTGHCQRNWLLNKSFCCNGVVNEVTSTSNLLLKRQEFECEAQGLWIAWKGH) the chain is on the lumenal side. Residues 155–175 (VSPFIIFMLLSVLFALISTLL) form a helical membrane-spanning segment. Topologically, residues 176–177 (VK) are cytoplasmic. A helical membrane pass occupies residues 178-198 (YVAPMATGSGISEIKVWVSGF). Residues 199-203 (EYNKE) lie on the Lumenal side of the membrane. The chain crosses the membrane as a helical span at residues 204 to 224 (FLGFLTLVIKSVALPLAISSG). Residues 225–264 (LSVGKEGPSVHYATCCGYLLTKWLLRDTLTYSSQYEYITA) are Cytoplasmic-facing. The helical transmembrane segment at 265-285 (ASGAGVAVAFGAPIGGVLFGL) threads the bilayer. At 286–296 (EEIASANRFNS) the chain is on the lumenal side. A helical membrane pass occupies residues 297–319 (STLWKSYYVALVAITTLKYIDPF). The Cytoplasmic segment spans residues 320-336 (RNGRVILFNVTYDRDWK). The helical transmembrane segment at 337–357 (VQEIPIFIALGIFGGLYGKYI) threads the bilayer. Topologically, residues 358 to 369 (SKWNINFIHFRK) are lumenal. The helical transmembrane segment at 370–390 (MYLSSWPVQEVLFLATLTALI) threads the bilayer. The Cytoplasmic portion of the chain corresponds to 391–436 (SYFNEFLKLDMTESMGILFHECVKNDNTSTFSHRLCQLDENTHAFE). The chain crosses the membrane as a helical span at residues 437–457 (FLKIFTSLCFATVIRALLVVV). Residues 458–465 (SYGARVPA) lie on the Lumenal side of the membrane. Residues 466–486 (GIFVPSMAVGATFGRAVSLLV) traverse the membrane as a helical segment. Residues 487–500 (ERFISGPSVITPGA) lie on the Cytoplasmic side of the membrane. The helical transmembrane segment at 501-523 (YAFLGAAATLSGITNLTLTVVVI) threads the bilayer. The Lumenal segment spans residues 524–529 (MFELTG). A helical transmembrane segment spans residues 530–552 (AFMYIIPLMIVVAITRIILSTSG). The Cytoplasmic segment spans residues 553–779 (ISGGIADQMI…FTTNRNGNVI (227 aa)). 2 consecutive CBS domains span residues 591–659 (MSSK…VNST) and 688–744 (MNES…YREV).

This sequence belongs to the chloride channel (TC 2.A.49) family. In terms of assembly, homodimer. Interacts with GET3. Post-translationally, proteolytically processed in the secretory pathway by protease KEX2 within the first extracellular loop. However, both the N- and C-terminal products of the cleavage reaction are required for assembly of a functional channel.

It is found in the golgi apparatus membrane. The protein resides in the endosome membrane. It localises to the prevacuolar compartment membrane. Functionally, anion/proton exchange transporter involved in iron and copper cation homeostasis. Involved in intracellular iron metabolism during growth on fermentable and non fermentable carbon sources. Required for proper copper-loading and maturation of multicopper oxidase FET3. Important for adjusting intracellular compartment pH to more alkaline pH under iron limitation. May also transport chloride ions through the plasma membrane. This chain is Anion/proton exchange transporter GEF1 (GEF1), found in Saccharomyces cerevisiae (strain ATCC 204508 / S288c) (Baker's yeast).